Consider the following 132-residue polypeptide: Interleukin-13 (132 aa).

The N-terminal stretch at 1-18 is a signal peptide; that stretch reads MALLLTAVIVLICFGGLT. N-linked (GlcNAc...) asparagine glycosylation is found at asparagine 38, asparagine 49, asparagine 57, and asparagine 75. 2 disulfides stabilise this stretch: cysteine 48–cysteine 76 and cysteine 64–cysteine 90.

The protein belongs to the IL-4/IL-13 family. In terms of assembly, interacts with IL13RA2.

Its subcellular location is the secreted. Functionally, cytokine that plays important roles in allergic inflammation and immune response to parasite infection. Synergizes with IL2 in regulating interferon-gamma synthesis. Stimulates B-cell proliferation, and activation of eosinophils, basophils, and mast cells. Plays an important role in controlling IL33 activity by modulating the production of transmembrane and soluble forms of interleukin-1 receptor-like 1/IL1RL1. Displays the capacity to antagonize Th1-driven proinflammatory immune response and downregulates synthesis of many proinflammatory cytokines including IL1, IL6, IL10, IL12 and TNF-alpha through a mechanism that partially involves suppression of NF-kappa-B. Also functions on nonhematopoietic cells, including endothelial cells where it induces vascular cell adhesion protein 1/VCAM1, which is important in the recruitment of eosinophils. Exerts its biological effects through its receptors which comprises the IL4R chain and the IL13RA1 chain, to activate JAK1 and TYK2, leading to the activation of STAT6. Aside from IL13RA1, another receptor IL13RA2 acts as a high affinity decoy for IL13 and mediates internalization and depletion of extracellular IL13. This Bos taurus (Bovine) protein is Interleukin-13 (IL13).